The following is a 154-amino-acid chain: Endoribonuclease YbeY (154 aa).

His116, His120, and His126 together coordinate Zn(2+).

It belongs to the endoribonuclease YbeY family. It depends on Zn(2+) as a cofactor.

Its subcellular location is the cytoplasm. Single strand-specific metallo-endoribonuclease involved in late-stage 70S ribosome quality control and in maturation of the 3' terminus of the 16S rRNA. The chain is Endoribonuclease YbeY from Buchnera aphidicola subsp. Baizongia pistaciae (strain Bp).